Reading from the N-terminus, the 895-residue chain is Procollagen lysyl hydroxylase and glycosyltransferase (895 aa).

Positions 1–194 are lysyl hydroxylase region; it reads MISRTYVINL…PSDEFIPIMH (194 aa). The glucosyl transferase region stretch occupies residues 537–895; that stretch reads YYFYISGDCI…KRYILVSFVN (359 aa). Residues 805-895 enclose the Fe2OG dioxygenase domain; the sequence is DINLAFVVKY…KRYILVSFVN (91 aa). Fe cation-binding residues include His-825, Asp-827, and His-877. Residue Arg-887 is part of the active site.

It depends on Fe cation as a cofactor. The cofactor is L-ascorbate.

The catalysed reaction is L-lysyl-[collagen] + 2-oxoglutarate + O2 = (5R)-5-hydroxy-L-lysyl-[collagen] + succinate + CO2. In terms of biological role, displays two enzymatic activities involved in procollagen processing. Forms hydroxylysine residues in -Xaa-Lys-Gly- sequences in collagens. These hydroxylysines are subsequentially glucosylated by a glucosyltransferase activity. Collagen post-translationally modified is detected in mimivirus virion. In Acanthamoeba polyphaga (Amoeba), this protein is Procollagen lysyl hydroxylase and glycosyltransferase.